The following is a 304-amino-acid chain: MSRSFYVDSLIIKDTSRPAPSLPEPHPGPDFFIPLGMPPPLVMSVSGPGCPSRKSGAFCVCPLCVTSHLHSSRGSVGAGSGGAGAGVTGAGGSGVAGAAGALPLLKGQFSSAPGDAQFCPRVNHAHHHHHPPQHHHHHHQPQQPGSAAAAAAAAAAAAAAAALGHPQHHAPVCTATTYNVADPRRFHCLTMGGSDASQVPNGKRMRTAFTSTQLLELEREFSSNMYLSRLRRIEIATYLNLSEKQVKIWFQNRRVKHKKEGKGTQRNSHAGCKCVGSQVHYARSEDEDSLSPASANDDKEISPL.

The disordered stretch occupies residues 116–151; that stretch reads AQFCPRVNHAHHHHHPPQHHHHHHQPQQPGSAAAAA. Positions 123–140 are enriched in basic residues; sequence NHAHHHHHPPQHHHHHHQ. Positions 141 to 151 are enriched in low complexity; it reads PQQPGSAAAAA. A DNA-binding region (homeobox) is located at residues 202–261; the sequence is GKRMRTAFTSTQLLELEREFSSNMYLSRLRRIEIATYLNLSEKQVKIWFQNRRVKHKKEG. A disordered region spans residues 283-304; that stretch reads RSEDEDSLSPASANDDKEISPL.

This sequence belongs to the Antp homeobox family.

The protein resides in the nucleus. The protein localises to the cytoplasm. Its function is as follows. Transcription factor that binds 5'-CNAATTAG-3' DNA sequence and regulates the expression of numerous genes including genes important for brain development. During telencephalic development, causes ventralization of pallial progenitors and, depending on the developmental stage, specifies different neuronal fates. At early stages, necessary and sufficient to correctly specify the ventral lateral ganglionic eminence (LGE) and its major derivatives, the striatal projection neurons. At later stages, may specify LGE progenitors toward dorsal LGE fates, including olfactory bulb interneurons. This Homo sapiens (Human) protein is GS homeobox 2 (GSX2).